The following is a 142-amino-acid chain: Hemoglobin subunit alpha (142 aa).

Ser1 is subject to N-acetylserine. A Globin domain is found at Ser1–Arg142. His58 is an O2 binding site. His88 contacts heme b.

Belongs to the globin family. Heterotetramer of two alpha chains and two beta chains. In terms of tissue distribution, red blood cells.

Its function is as follows. Involved in oxygen transport from gills to the various peripheral tissues. This Catostomus clarkii (Desert sucker) protein is Hemoglobin subunit alpha (hba).